A 106-amino-acid polypeptide reads, in one-letter code: Immunoglobulin lambda constant 1 (106 aa).

Positions 7-101 (PTVTLFPPSS…EGSTVEKTVA (95 aa)) constitute an Ig-like domain. The cysteines at positions 28 and 87 are disulfide-linked.

In terms of assembly, immunoglobulins are composed of two identical heavy chains and two identical light chains; disulfide-linked.

The protein resides in the secreted. It localises to the cell membrane. Its function is as follows. Constant region of immunoglobulin light chains. Immunoglobulins, also known as antibodies, are membrane-bound or secreted glycoproteins produced by B lymphocytes. In the recognition phase of humoral immunity, the membrane-bound immunoglobulins serve as receptors which, upon binding of a specific antigen, trigger the clonal expansion and differentiation of B lymphocytes into immunoglobulins-secreting plasma cells. Secreted immunoglobulins mediate the effector phase of humoral immunity, which results in the elimination of bound antigens. The antigen binding site is formed by the variable domain of one heavy chain, together with that of its associated light chain. Thus, each immunoglobulin has two antigen binding sites with remarkable affinity for a particular antigen. The variable domains are assembled by a process called V-(D)-J rearrangement and can then be subjected to somatic hypermutations which, after exposure to antigen and selection, allow affinity maturation for a particular antigen. The sequence is that of Immunoglobulin lambda constant 1 from Homo sapiens (Human).